A 429-amino-acid chain; its full sequence is [LysW]-aminoadipate semialdehyde transaminase (429 aa).

Residues 112 to 113 (GT) and F139 contribute to the pyridoxal 5'-phosphate site. R142 contacts substrate. Position 226–229 (226–229 (DEIQ)) interacts with pyridoxal 5'-phosphate. Residue K255 is modified to N6-(pyridoxal phosphate)lysine. A substrate-binding site is contributed by T283. T284 serves as a coordination point for pyridoxal 5'-phosphate. The segment at 408–429 (LRAQQSEMGQQQVSQGESVQTE) is disordered. Low complexity predominate over residues 411 to 429 (QQSEMGQQQVSQGESVQTE).

This sequence belongs to the class-III pyridoxal-phosphate-dependent aminotransferase family. LysJ subfamily. In terms of assembly, homodimer. Requires pyridoxal 5'-phosphate as cofactor.

It is found in the cytoplasm. The enzyme catalyses [amino-group carrier protein]-C-terminal-gamma-(L-lysyl)-L-glutamate + 2-oxoglutarate = [amino-group carrier protein]-C-terminal-N-(1-carboxy-5-oxopentan-1-yl)-L-glutamine + L-glutamate. Its pathway is amino-acid biosynthesis; L-lysine biosynthesis via AAA pathway; L-lysine from L-alpha-aminoadipate (Thermus route): step 4/5. In terms of biological role, catalyzes the transfer of the amino group of L-glutamate to [LysW]-aminoadipate 6-semialdehyde, generating [LysW]-gamma-L-lysine. In Deinococcus radiodurans (strain ATCC 13939 / DSM 20539 / JCM 16871 / CCUG 27074 / LMG 4051 / NBRC 15346 / NCIMB 9279 / VKM B-1422 / R1), this protein is [LysW]-aminoadipate semialdehyde transaminase.